We begin with the raw amino-acid sequence, 1096 residues long: Lysine-specific demethylase PHF2 (1096 aa).

Residues 5–56 (PVYCVCRLPYDVTRFMIECDACKDWFHGSCVGVEEEEAPDIDIYHCPNCEKT) form a PHD-type zinc finger. 2-oxoglutarate contacts are provided by threonine 193 and threonine 246. Residues 197 to 353 (FSDTRMSSFV…MQMRAYEVER (157 aa)) enclose the JmjC domain. Fe cation is bound by residues histidine 249 and aspartate 251. Residues tyrosine 259, lysine 266, tyrosine 321, and threonine 323 each coordinate 2-oxoglutarate. Tyrosine 321 is a Fe cation binding site. Disordered regions lie at residues 447 to 634 (KAVR…KDNK) and 646 to 674 (GSKA…KPVR). The residue at position 474 (serine 474) is a Phosphoserine. Position 479 is a phosphothreonine (threonine 479). The segment covering 503-518 (SKIPKPPKPPKPPRPP) has biased composition (pro residues). A Phosphoserine modification is found at serine 539. Basic and acidic residues-rich tracts occupy residues 548 to 563 (LEAH…EPPK) and 578 to 624 (DVVH…KLEK). Serine 655 is subject to Phosphoserine. Basic and acidic residues predominate over residues 665-674 (FKEDKPKPVR). Phosphoserine occurs at positions 681 and 705. Lysine 711 is covalently cross-linked (Glycyl lysine isopeptide (Lys-Gly) (interchain with G-Cter in SUMO2)). Disordered stretches follow at residues 719 to 799 (TKPK…QGML), 817 to 846 (AGQA…KRLL), and 877 to 1078 (YPSL…MATA). At lysine 720 the chain carries N6-acetyllysine. Tyrosine 728 carries the post-translational modification Phosphotyrosine. Residues 729 to 757 (KSDDSSDEGSLHIDTDTKPGRNARVKKES) show a composition bias toward basic and acidic residues. Phosphoserine is present on residues serine 730, serine 733, serine 734, and serine 738. A phosphoserine mark is found at serine 879, serine 882, and serine 899. Residues 916 to 925 (RQDRPVREGT) are compositionally biased toward basic and acidic residues. Basic residues predominate over residues 949–959 (SKKKKSAKRKL). Composition is skewed to low complexity over residues 960–1009 (TPNT…EGSS) and 1027–1040 (TAAG…AGRT). Positions 1053-1065 (RRPSASSPNNNTA) are enriched in polar residues. At serine 1056 the chain carries Phosphoserine; by PKA.

The protein belongs to the JHDM1 histone demethylase family. JHDM1D subfamily. As to quaternary structure, component of the PHF2-ARID5B complex, at least composed of PHF2 and ARID5B. Interacts with HNF4A and NR1H4. Interacts with RELA. Post-translationally, phosphorylated by PKA on specific serine residues, leading to the formation of an active lysine demethylase complex. As to expression, widely expressed, including in liver (at protein level).

Its subcellular location is the nucleus. It localises to the nucleolus. It is found in the chromosome. The protein resides in the centromere. The protein localises to the kinetochore. It catalyses the reaction N(6),N(6)-dimethyl-L-lysyl(9)-[histone H3] + 2-oxoglutarate + O2 = N(6)-methyl-L-lysyl(9)-[histone H3] + formaldehyde + succinate + CO2. Its activity is regulated as follows. Enzymatically inactive by itself, and become active following phosphorylation by PKA. Functionally, lysine demethylase that demethylates both histones and non-histone proteins. Enzymatically inactive by itself, and becomes active following phosphorylation by PKA: forms a complex with ARID5B and mediates demethylation of methylated ARID5B. Demethylation of ARID5B leads to target the PHF2-ARID5B complex to target promoters, where PHF2 mediates demethylation of dimethylated 'Lys-9' of histone H3 (H3K9me2), followed by transcription activation of target genes. The PHF2-ARID5B complex acts as a coactivator of HNF4A in liver. PHF2 is recruited to trimethylated 'Lys-4' of histone H3 (H3K4me3) at rDNA promoters and promotes expression of rDNA. Involved in the activation of toll-like receptor 4 (TLR4)-target inflammatory genes in macrophages by catalyzing the demethylation of trimethylated histone H4 lysine 20 (H4K20me3) at the gene promoters. The polypeptide is Lysine-specific demethylase PHF2 (Homo sapiens (Human)).